The primary structure comprises 339 residues: Fructose-1,6-bisphosphatase, cytosolic (339 aa).

5 residues coordinate Mg(2+): Glu71, Glu100, Asp121, Leu123, and Asp124. Substrate is bound by residues 124–127 (DGSS), Asn215, Tyr247, Tyr267, and Lys277. Residue Glu283 participates in Mg(2+) binding.

It belongs to the FBPase class 1 family. Mg(2+) serves as cofactor.

It localises to the cytoplasm. The enzyme catalyses beta-D-fructose 1,6-bisphosphate + H2O = beta-D-fructose 6-phosphate + phosphate. The sequence is that of Fructose-1,6-bisphosphatase, cytosolic from Oryza sativa subsp. indica (Rice).